Here is a 95-residue protein sequence, read N- to C-terminus: MQSPYIILFALVTLLGSISGGATSTIATRNGDVGLTSAGPTFVRKQRLLRQDPNLYETIMNDRSASAFANALRKAEMAAETEVAPLVRSTNYNDS.

The signal sequence occupies residues 1–20 (MQSPYIILFALVTLLGSISG). Residues 47-50 (RLLR) carry the RxLR motif.

This sequence belongs to the RxLR effector family.

It localises to the secreted. It is found in the host nucleus. The protein resides in the host cytoplasm. Secreted effector that partially suppresses the host cell death induced by cell death-inducing proteins. The sequence is that of Secreted RxLR effector protein 20 from Plasmopara viticola (Downy mildew of grapevine).